An 80-amino-acid chain; its full sequence is Large ribosomal subunit protein uL24 (80 aa).

The disordered stretch occupies residues 53–80 (HMKPTQSHPQGSIIEREFPIHASNVKKS).

This sequence belongs to the universal ribosomal protein uL24 family. As to quaternary structure, part of the 50S ribosomal subunit.

In terms of biological role, one of two assembly initiator proteins, it binds directly to the 5'-end of the 23S rRNA, where it nucleates assembly of the 50S subunit. One of the proteins that surrounds the polypeptide exit tunnel on the outside of the subunit. This chain is Large ribosomal subunit protein uL24, found in Chlorobium limicola (strain DSM 245 / NBRC 103803 / 6330).